Consider the following 168-residue polypeptide: Vasopressin-neurophysin 2-copeptin (168 aa).

Positions 1 to 23 (MLAMMLNTTLSACFLSLLALTSA) are cleaved as a signal peptide. Cys24 and Cys29 are disulfide-bonded. Gly32 carries the glycine amide modification. Intrachain disulfides connect Cys45-Cys89, Cys48-Cys62, Cys56-Cys79, Cys63-Cys69, Cys96-Cys108, Cys102-Cys120, and Cys109-Cys114. A glycan (N-linked (GlcNAc...) asparagine) is linked at Asn135.

Belongs to the vasopressin/oxytocin family. As to quaternary structure, interacts with vasopressin receptors V1bR/AVPR1B (Ki=85 pM), V1aR/AVPR1A (Ki=0.6 nM) and V2R/AVPR2 (Ki=4.9 nM). Interacts with oxytocin receptor (OXTR) (Ki=110 nM).

The protein localises to the secreted. In terms of biological role, neurophysin 2 specifically binds vasopressin. Its function is as follows. Vasopressin has a direct antidiuretic action on the kidney, it also causes vasoconstriction of the peripheral vessels. Acts by binding to vasopressin receptors (V1bR/AVPR1B, V1aR/AVPR1A, and V2R/AVPR2). This Rattus norvegicus (Rat) protein is Vasopressin-neurophysin 2-copeptin (Avp).